The sequence spans 22 residues: Brevinin-1OKc (22 aa).

Residue Lys22 is modified to Lysine amide.

In terms of tissue distribution, expressed by the skin glands.

It is found in the secreted. In terms of biological role, antimicrobial peptide. Active against Gram-negative bacterium E.coli (MIC=6 uM) and against Gram-positive bacterium S.aureus (MIC=12.5 uM). In Nidirana okinavana (Kampira Falls frog), this protein is Brevinin-1OKc.